A 155-amino-acid polypeptide reads, in one-letter code: 2-C-methyl-D-erythritol 2,4-cyclodiphosphate synthase (155 aa).

A divalent metal cation is bound by residues Asp-8 and His-10. 4-CDP-2-C-methyl-D-erythritol 2-phosphate contacts are provided by residues 8-10 (DVH) and 34-35 (HS). His-42 serves as a coordination point for a divalent metal cation. 4-CDP-2-C-methyl-D-erythritol 2-phosphate is bound by residues 56–58 (DIG), 61–65 (FPDSD), 100–106 (AQKPKML), 132–135 (TTEE), Phe-139, and Lys-142.

This sequence belongs to the IspF family. In terms of assembly, homotrimer. A divalent metal cation is required as a cofactor.

The enzyme catalyses 4-CDP-2-C-methyl-D-erythritol 2-phosphate = 2-C-methyl-D-erythritol 2,4-cyclic diphosphate + CMP. It functions in the pathway isoprenoid biosynthesis; isopentenyl diphosphate biosynthesis via DXP pathway; isopentenyl diphosphate from 1-deoxy-D-xylulose 5-phosphate: step 4/6. In terms of biological role, involved in the biosynthesis of isopentenyl diphosphate (IPP) and dimethylallyl diphosphate (DMAPP), two major building blocks of isoprenoid compounds. Catalyzes the conversion of 4-diphosphocytidyl-2-C-methyl-D-erythritol 2-phosphate (CDP-ME2P) to 2-C-methyl-D-erythritol 2,4-cyclodiphosphate (ME-CPP) with a corresponding release of cytidine 5-monophosphate (CMP). This Clostridium botulinum (strain ATCC 19397 / Type A) protein is 2-C-methyl-D-erythritol 2,4-cyclodiphosphate synthase.